The sequence spans 382 residues: D-galactonate dehydratase (382 aa).

Asp-183 contributes to the Mg(2+) binding site. His-185 (proton donor) is an active-site residue. 2 residues coordinate Mg(2+): Glu-209 and Glu-235. His-285 serves as the catalytic Proton acceptor. Positions 361 to 382 (NENPPDWRNPVWRHSDGSIAEW) are disordered.

Belongs to the mandelate racemase/muconate lactonizing enzyme family. GalD subfamily. It depends on Mg(2+) as a cofactor.

The enzyme catalyses D-galactonate = 2-dehydro-3-deoxy-D-galactonate + H2O. It participates in carbohydrate acid metabolism; D-galactonate degradation; D-glyceraldehyde 3-phosphate and pyruvate from D-galactonate: step 1/3. In terms of biological role, catalyzes the dehydration of D-galactonate to 2-keto-3-deoxy-D-galactonate. This is D-galactonate dehydratase from Xanthomonas axonopodis pv. citri (strain 306).